Reading from the N-terminus, the 478-residue chain is Siroheme synthase (478 aa).

The precorrin-2 dehydrogenase /sirohydrochlorin ferrochelatase stretch occupies residues 1-207; sequence MTANVLFPLF…QRHAEAEAVL (207 aa). Residues 25-26 and 46-47 each bind NAD(+); these read KV and PS. A Phosphoserine modification is found at Ser-132. The tract at residues 220 to 478 is uroporphyrinogen-III C-methyltransferase; that stretch reads GSVTLVGAGA…PCPPRTHPIS (259 aa). The active-site Proton acceptor is Asp-252. Lys-274 serves as the catalytic Proton donor. S-adenosyl-L-methionine contacts are provided by residues 305–307, Val-310, 335–336, Met-387, and Gly-416; these read GGD and TA.

The protein in the N-terminal section; belongs to the precorrin-2 dehydrogenase / sirohydrochlorin ferrochelatase family. In the C-terminal section; belongs to the precorrin methyltransferase family.

The enzyme catalyses uroporphyrinogen III + 2 S-adenosyl-L-methionine = precorrin-2 + 2 S-adenosyl-L-homocysteine + H(+). The catalysed reaction is precorrin-2 + NAD(+) = sirohydrochlorin + NADH + 2 H(+). It carries out the reaction siroheme + 2 H(+) = sirohydrochlorin + Fe(2+). It functions in the pathway cofactor biosynthesis; adenosylcobalamin biosynthesis; precorrin-2 from uroporphyrinogen III: step 1/1. It participates in cofactor biosynthesis; adenosylcobalamin biosynthesis; sirohydrochlorin from precorrin-2: step 1/1. Its pathway is porphyrin-containing compound metabolism; siroheme biosynthesis; precorrin-2 from uroporphyrinogen III: step 1/1. The protein operates within porphyrin-containing compound metabolism; siroheme biosynthesis; siroheme from sirohydrochlorin: step 1/1. It functions in the pathway porphyrin-containing compound metabolism; siroheme biosynthesis; sirohydrochlorin from precorrin-2: step 1/1. Its function is as follows. Multifunctional enzyme that catalyzes the SAM-dependent methylations of uroporphyrinogen III at position C-2 and C-7 to form precorrin-2 via precorrin-1. Then it catalyzes the NAD-dependent ring dehydrogenation of precorrin-2 to yield sirohydrochlorin. Finally, it catalyzes the ferrochelation of sirohydrochlorin to yield siroheme. The chain is Siroheme synthase from Xylella fastidiosa (strain M23).